Here is a 133-residue protein sequence, read N- to C-terminus: UPF0344 protein SE_0666 (133 aa).

The next 4 helical transmembrane spans lie at 1–21 (MLHVHILSWVLAIILFIATYL), 42–62 (LFMLLTLISGFWELIEEFMAA), 71–91 (MLLTLKMLCGLAVIAFMEISI), and 103–123 (FFWITIILIIITMAIGVILPW).

It belongs to the UPF0344 family.

Its subcellular location is the cell membrane. The sequence is that of UPF0344 protein SE_0666 from Staphylococcus epidermidis (strain ATCC 12228 / FDA PCI 1200).